The chain runs to 265 residues: Cell adhesion molecule CEACAM10 (265 aa).

An N-terminal signal peptide occupies residues M1–T33. Ig-like V-type domains lie at Q35 to P142 and Q155 to A262. N44, N87, and N224 each carry an N-linked (GlcNAc...) asparagine glycan.

The protein belongs to the immunoglobulin superfamily. CEA family. In terms of tissue distribution, abundant in seminal vesicle and traces in epididymis and prostate (at protein level). Highly expressed in seminal vesicle, minor in colon and placenta and, to a lesser extent, in small intestine, caecum, stomach, salivary gland and bone marrow.

It is found in the secreted. Its subcellular location is the extracellular space. Its function is as follows. May interact with other CEACAM proteins on the sperm surface. The protein is Cell adhesion molecule CEACAM10 of Mus musculus (Mouse).